Here is a 78-residue protein sequence, read N- to C-terminus: Large ribosomal subunit protein bL28 (78 aa).

The tract at residues 1–26 (MSAYCQVTGRKPSFGKSVSHSHRRTN) is disordered.

The protein belongs to the bacterial ribosomal protein bL28 family.

The protein is Large ribosomal subunit protein bL28 of Corynebacterium jeikeium (strain K411).